The sequence spans 288 residues: Nucleotide-binding protein Pcar_1935 (288 aa).

Gly11–Thr18 lines the ATP pocket. Asp62–Asn65 contacts GTP.

The protein belongs to the RapZ-like family.

Displays ATPase and GTPase activities. This Syntrophotalea carbinolica (strain DSM 2380 / NBRC 103641 / GraBd1) (Pelobacter carbinolicus) protein is Nucleotide-binding protein Pcar_1935.